The chain runs to 221 residues: Small ribosomal subunit protein uS4c (221 aa).

A disordered region spans residues 26 to 53 (RKRTDNRCMPGQHRKKRNDSTKKTKNSK). Basic residues predominate over residues 37–53 (QHRKKRNDSTKKTKNSK). An S4 RNA-binding domain is found at 103-161 (MRLDNIVFRLGMAPTIPAARQLVNHGHIVVNNKKVDISSYQCQSQDVISVTKNKTIRTL).

Belongs to the universal ribosomal protein uS4 family. In terms of assembly, part of the 30S ribosomal subunit. Contacts protein S5. The interaction surface between S4 and S5 is involved in control of translational fidelity.

The protein localises to the plastid. It is found in the chloroplast. One of the primary rRNA binding proteins, it binds directly to 16S rRNA where it nucleates assembly of the body of the 30S subunit. Functionally, with S5 and S12 plays an important role in translational accuracy. The protein is Small ribosomal subunit protein uS4c (rps4) of Pleurastrum terricola (Filamentous green alga).